The following is a 1257-amino-acid chain: Period circadian protein homolog 2 (1257 aa).

The tract at residues 1–60 (MNGYVDFSPSPTSPTKEPGAPQPTQAVLQEDVDMSSGSSGNENCSTGRDSQGSDCDDNGK) is disordered. The span at 35–53 (SSGSSGNENCSTGRDSQGS) shows a compositional bias: polar residues. Residues 109–118 (LIRTLKELKV) carry the Nuclear export signal 1 motif. The 68-residue stretch at 179 to 246 (ITSEYIVKNA…FHSYTTPYKL (68 aa)) folds into the PAS 1 domain. The short motif at 306–310 (LCCLL) is the LXXLL element. Residues 319-385 (YEAPRIPPEK…MLAIHKKILQ (67 aa)) enclose the PAS 2 domain. Residues 393 to 436 (YSPIRFRTRNGEYITLDTSWSSFINPWSRKISFIIGRHKVRVGP) form the PAC domain. A Nuclear export signal 2 motif is present at residues 460–469 (LTEQIHRLLM). 2 disordered regions span residues 471–565 (PVPH…GASL) and 617–638 (PSRKATVSPGLHSGEAARPSKV). Residues 478–482 (SGYGS) form an important for protein stability region. Polar residues predominate over residues 493 to 504 (MSQTSSSDSNGQ). The tract at residues 510–709 (RRSGIFKTSG…GAAGGLSQEK (200 aa)) is CSNK1E binding domain. Residues Ser-525, Ser-528, Ser-531, Ser-538, and Ser-544 each carry the phosphoserine modification. A Phosphothreonine modification is found at Thr-554. 6 positions are modified to phosphoserine: Ser-659, Ser-693, Ser-697, Ser-706, Ser-758, and Ser-763. Residues 757-832 (RSRAQASDRG…SDTSQSSCPS (76 aa)) are disordered. Positions 778–794 (KKTGKNRKLKSKRVKTR) match the Nuclear localization signal motif. Basic residues predominate over residues 779–792 (KTGKNRKLKSKRVK). The span at 821–832 (SPSDTSQSSCPS) shows a compositional bias: low complexity. Thr-858 carries the phosphothreonine modification. Positions 882 to 1067 (EFAVQPLPFA…DLCSATGSAL (186 aa)) are interaction with PPARG. The residue at position 939 (Ser-939) is a Phosphoserine. Thr-964 is subject to Phosphothreonine. At Ser-971 the chain carries Phosphoserine. A Nuclear export signal 3 motif is present at residues 983–990 (LQLNLLQL). The tract at residues 994 to 1044 (PEGSTGAAGTLGTTGTAASGLDCTSGTSRDRQPKAPPTCNEPSDTQNSDAI) is disordered. Over residues 996 to 1014 (GSTGAAGTLGTTGTAASGL) the composition is skewed to low complexity. Positions 1033–1044 (NEPSDTQNSDAI) are enriched in polar residues. The LXXLL signature appears at 1051 to 1055 (LNLLL). Residues 1070–1092 (SGASATSDSLGSSSLGFGTSQSG) show a composition bias toward low complexity. The tract at residues 1070 to 1115 (SGASATSDSLGSSSLGFGTSQSGAGSSDTSHTSKYFGSIDSSENNH) is disordered. Residues 1093–1111 (AGSSDTSHTSKYFGSIDSS) show a composition bias toward polar residues. Phosphoserine is present on Ser-1126. The segment at 1157–1257 (SRDLQAVLKE…LTGPRIEAQT (101 aa)) is CRY binding domain. The interval 1224–1257 (PYEEDSPSPGLCDTSEAKEEEGEQLTGPRIEAQT) is disordered.

Homodimer. Component of the circadian core oscillator, which includes the CRY proteins, CLOCK or NPAS2, BMAL1 or BMAL2, CSNK1D and/or CSNK1E, TIMELESS, and the PER proteins. Interacts with CLOCK-BMAL1 (off DNA). Interacts with BMAL2. Interacts directly with PER1 and PER3, and through a C-terminal domain, with CRY1 and CRY2. Interacts (via PAS 2 domain) with TIMELESS. Interacts with NFIL3. Different large complexes have been identified with different repressive functions. The core of PER complexes is composed of at least PER1, PER2, PER3, CRY1, CRY2, CSNK1D and/or CSNK1E. The large PER complex involved in the repression of transcriptional termination is composed of at least PER2, CDK9, DDX5, DHX9, NCBP1 and POLR2A (active). The large PER complex involved in the histone deacetylation is composed of at least HDAC1, PER2, SFPQ and SIN3A. The large PER complex involved in the histone methylation is composed of at least PER2, CBX3, TRIM28, SUV39H1 and/or SUV39H2; CBX3 mediates the formation of the complex. Interacts with SETX; the interaction inhibits termination of circadian target genes. Interacts with the nuclear receptors HNF4A, NR1D1, NR4A2, RORA, PPARA, PPARG and THRA; the interaction with at least PPARG is ligand dependent. Interacts with PML. Interacts (phosphorylated) with BTRC and FBXW11; the interactions trigger proteasomal degradation. Interacts with NONO and SFPQ. Interacts with CAVIN3. Interacts with MAGEL2. Interacts with MAP1LC3B. Interacts with HNF4A. In terms of processing, acetylated. Deacetylated by SIRT1, resulting in decreased protein stability. Deacetylated by SIRT6, preventing its degradation by the proteasome, resulting in increased protein stability. Post-translationally, phosphorylated by CSNK1E and CSNK1D. Phosphorylation results in PER2 protein degradation. May be dephosphorylated by PP1. Ubiquitinated, leading to its proteasomal degradation. Ubiquitination may be inhibited by CRY1. In the brain, high expression in SCN during the subjective day. Constitutive expression in the cornu ammonis and in the dentate gyrus of the hippocampus. Also expressed in the piriform cortex and the glomeruli of the olfactory bulb, and at a lower extent in the cerebral cortex. Not expressed in the pars tuberalis and the Purkinje neurons. Also expressed in adipose tissue (white and brown), heart, kidney, bladder, lumbar spinal cord, skeletal muscle, spleen, lung, pancreas and liver with highest levels in skeletal muscle and liver and lowest levels in spleen.

It localises to the nucleus. Its subcellular location is the cytoplasm. The protein resides in the perinuclear region. Transcriptional repressor which forms a core component of the circadian clock. The circadian clock, an internal time-keeping system, regulates various physiological processes through the generation of approximately 24 hour circadian rhythms in gene expression, which are translated into rhythms in metabolism and behavior. It is derived from the Latin roots 'circa' (about) and 'diem' (day) and acts as an important regulator of a wide array of physiological functions including metabolism, sleep, body temperature, blood pressure, endocrine, immune, cardiovascular, and renal function. Consists of two major components: the central clock, residing in the suprachiasmatic nucleus (SCN) of the brain, and the peripheral clocks that are present in nearly every tissue and organ system. Both the central and peripheral clocks can be reset by environmental cues, also known as Zeitgebers (German for 'timegivers'). The predominant Zeitgeber for the central clock is light, which is sensed by retina and signals directly to the SCN. The central clock entrains the peripheral clocks through neuronal and hormonal signals, body temperature and feeding-related cues, aligning all clocks with the external light/dark cycle. Circadian rhythms allow an organism to achieve temporal homeostasis with its environment at the molecular level by regulating gene expression to create a peak of protein expression once every 24 hours to control when a particular physiological process is most active with respect to the solar day. Transcription and translation of core clock components (CLOCK, NPAS2, BMAL1, BMAL2, PER1, PER2, PER3, CRY1 and CRY2) plays a critical role in rhythm generation, whereas delays imposed by post-translational modifications (PTMs) are important for determining the period (tau) of the rhythms (tau refers to the period of a rhythm and is the length, in time, of one complete cycle). A diurnal rhythm is synchronized with the day/night cycle, while the ultradian and infradian rhythms have a period shorter and longer than 24 hours, respectively. Disruptions in the circadian rhythms contribute to the pathology of cardiovascular diseases, cancer, metabolic syndrome and aging. A transcription/translation feedback loop (TTFL) forms the core of the molecular circadian clock mechanism. Transcription factors, CLOCK or NPAS2 and BMAL1 or BMAL2, form the positive limb of the feedback loop, act in the form of a heterodimer and activate the transcription of core clock genes and clock-controlled genes (involved in key metabolic processes), harboring E-box elements (5'-CACGTG-3') within their promoters. The core clock genes: PER1/2/3 and CRY1/2 which are transcriptional repressors form the negative limb of the feedback loop and interact with the CLOCK|NPAS2-BMAL1|BMAL2 heterodimer inhibiting its activity and thereby negatively regulating their own expression. This heterodimer also activates nuclear receptors NR1D1/2 and RORA/B/G, which form a second feedback loop and which activate and repress BMAL1 transcription, respectively. PER1 and PER2 proteins transport CRY1 and CRY2 into the nucleus with appropriate circadian timing, but also contribute directly to repression of clock-controlled target genes through interaction with several classes of RNA-binding proteins, helicases and others transcriptional repressors. PER appears to regulate circadian control of transcription by at least three different modes. First, interacts directly with the CLOCK-BMAL1 at the tail end of the nascent transcript peak to recruit complexes containing the SIN3-HDAC that remodel chromatin to repress transcription. Second, brings H3K9 methyltransferases such as SUV39H1 and SUV39H2 to the E-box elements of the circadian target genes, like PER2 itself or PER1. The recruitment of each repressive modifier to the DNA seems to be very precisely temporally orchestrated by the large PER complex, the deacetylases acting before than the methyltransferases. Additionally, large PER complexes are also recruited to the target genes 3' termination site through interactions with RNA-binding proteins and helicases that may play a role in transcription termination to regulate transcription independently of CLOCK-BMAL1 interactions. Recruitment of large PER complexes to the elongating polymerase at PER and CRY termination sites inhibited SETX action, impeding RNA polymerase II release and thereby repressing transcriptional reinitiation. May propagate clock information to metabolic pathways via the interaction with nuclear receptors. Coactivator of PPARA and corepressor of NR1D1, binds rhythmically at the promoter of nuclear receptors target genes like BMAL1 or G6PC1. Directly and specifically represses PPARG proadipogenic activity by blocking PPARG recruitment to target promoters and thereby transcriptional activation. Required for fatty acid and lipid metabolism, is involved as well in the regulation of circulating insulin levels. Plays an important role in the maintenance of cardiovascular functions through the regulation of NO and vasodilatatory prostaglandins production in aortas. Controls circadian glutamate uptake in synaptic vesicles through the regulation of VGLUT1 expression. May also be involved in the regulation of inflammatory processes. Represses the CLOCK-BMAL1 induced transcription of BHLHE40/DEC1 and ATF4. Negatively regulates the formation of the TIMELESS-CRY1 complex by competing with TIMELESS for binding to CRY1. The polypeptide is Period circadian protein homolog 2 (Per2) (Mus musculus (Mouse)).